The primary structure comprises 330 residues: 4-epi-cubebol synthase ((2E,6E)-farnesyl diphosphate cyclizing) (330 aa).

Mg(2+) contacts are provided by D91 and E96. Residues 91–96 (DDAFCE) carry the DDXXXE motif motif. Substrate is bound at residue R184. Positions 230 and 234 each coordinate Mg(2+). K237 is a binding site for substrate. Mg(2+) is bound at residue E238. 316 to 317 (RY) lines the substrate pocket.

This sequence belongs to the terpene synthase family. Requires Mg(2+) as cofactor.

It catalyses the reaction (2E,6E)-farnesyl diphosphate + H2O = 4-epi-cubebol + diphosphate. It participates in secondary metabolite biosynthesis; terpenoid biosynthesis. Functionally, catalyzes the conversion of (2E,6E)-farnesyl diphosphate (FPP) to yield the bicyclic sesquiterpenol 4-epi-cubebol via a 1,10-cyclization, which requires the abstraction of the pyrophosphate from FPP to yield a (E,E)-germacradienyl cation. The only accepted substrate is (2E,6E)-farnesyl diphosphate (FPP). The chain is 4-epi-cubebol synthase ((2E,6E)-farnesyl diphosphate cyclizing) from Streptosporangium roseum (strain ATCC 12428 / DSM 43021 / JCM 3005 / KCTC 9067 / NCIMB 10171 / NRRL 2505 / NI 9100).